The following is a 252-amino-acid chain: Small ribosomal subunit protein uS3 (252 aa).

Residues 39–111 (IRKLINNFTK…DVNLNVLEVK (73 aa)) enclose the KH type-2 domain. The tract at residues 222–252 (KPFASQSSNTPNRRPRNFKGGNNNHVNAKKN) is disordered. Residues 241-252 (GGNNNHVNAKKN) are compositionally biased toward polar residues.

The protein belongs to the universal ribosomal protein uS3 family. As to quaternary structure, part of the 30S ribosomal subunit. Forms a tight complex with proteins S10 and S14.

Functionally, binds the lower part of the 30S subunit head. Binds mRNA in the 70S ribosome, positioning it for translation. In Onion yellows phytoplasma (strain OY-M), this protein is Small ribosomal subunit protein uS3.